A 393-amino-acid polypeptide reads, in one-letter code: NAD(P)H-quinone oxidoreductase subunit H, chloroplastic (393 aa).

Belongs to the complex I 49 kDa subunit family. As to quaternary structure, NDH is composed of at least 16 different subunits, 5 of which are encoded in the nucleus.

It is found in the plastid. It localises to the chloroplast thylakoid membrane. The enzyme catalyses a plastoquinone + NADH + (n+1) H(+)(in) = a plastoquinol + NAD(+) + n H(+)(out). It carries out the reaction a plastoquinone + NADPH + (n+1) H(+)(in) = a plastoquinol + NADP(+) + n H(+)(out). Its function is as follows. NDH shuttles electrons from NAD(P)H:plastoquinone, via FMN and iron-sulfur (Fe-S) centers, to quinones in the photosynthetic chain and possibly in a chloroplast respiratory chain. The immediate electron acceptor for the enzyme in this species is believed to be plastoquinone. Couples the redox reaction to proton translocation, and thus conserves the redox energy in a proton gradient. The protein is NAD(P)H-quinone oxidoreductase subunit H, chloroplastic of Saccharum hybrid (Sugarcane).